Consider the following 204-residue polypeptide: B9 domain-containing protein 1 (204 aa).

Residues 9 to 127 (FLLMVNGQVE…TIPMFVPEST (119 aa)) enclose the C2 B9-type domain. Residues 182–204 (GYDTGPSDTQGVLGPSPPQSFPQ) form a disordered region.

The protein belongs to the B9D family. As to quaternary structure, part of the tectonic-like complex (also named B9 complex).

It localises to the cytoplasm. It is found in the cytoskeleton. Its subcellular location is the cilium basal body. The protein localises to the cilium axoneme. Functionally, component of the tectonic-like complex, a complex localized at the transition zone of primary cilia and acting as a barrier that prevents diffusion of transmembrane proteins between the cilia and plasma membranes. Required for ciliogenesis and sonic hedgehog/SHH signaling. The sequence is that of B9 domain-containing protein 1 (B9D1) from Homo sapiens (Human).